The sequence spans 550 residues: Dihydroxy-acid dehydratase (550 aa).

Residue D78 coordinates Mg(2+). C119 contacts [2Fe-2S] cluster. Residues D120 and K121 each coordinate Mg(2+). K121 bears the N6-carboxylysine mark. C191 contacts [2Fe-2S] cluster. Residue E440 coordinates Mg(2+). S466 acts as the Proton acceptor in catalysis.

This sequence belongs to the IlvD/Edd family. Homodimer. Requires [2Fe-2S] cluster as cofactor. Mg(2+) is required as a cofactor.

It carries out the reaction (2R)-2,3-dihydroxy-3-methylbutanoate = 3-methyl-2-oxobutanoate + H2O. It catalyses the reaction (2R,3R)-2,3-dihydroxy-3-methylpentanoate = (S)-3-methyl-2-oxopentanoate + H2O. It participates in amino-acid biosynthesis; L-isoleucine biosynthesis; L-isoleucine from 2-oxobutanoate: step 3/4. The protein operates within amino-acid biosynthesis; L-valine biosynthesis; L-valine from pyruvate: step 3/4. Functions in the biosynthesis of branched-chain amino acids. Catalyzes the dehydration of (2R,3R)-2,3-dihydroxy-3-methylpentanoate (2,3-dihydroxy-3-methylvalerate) into 2-oxo-3-methylpentanoate (2-oxo-3-methylvalerate) and of (2R)-2,3-dihydroxy-3-methylbutanoate (2,3-dihydroxyisovalerate) into 2-oxo-3-methylbutanoate (2-oxoisovalerate), the penultimate precursor to L-isoleucine and L-valine, respectively. In Methanococcus maripaludis (strain C5 / ATCC BAA-1333), this protein is Dihydroxy-acid dehydratase.